The following is a 759-amino-acid chain: GTPase-activating protein rrc-1 (759 aa).

Residues 164–243 (PAIAAAVVTK…PRDCVMLIDD (80 aa)) form the SH3 domain. Residues 280-473 (LELTDLYMRT…FFIENSESLF (194 aa)) form the Rho-GAP domain. The segment at 591–624 (ARSMRPTSRPPPSPRTRRARFSNGSSNNVQKLNE) is disordered. Residues 612 to 622 (SNGSSNNVQKL) show a composition bias toward polar residues.

In terms of tissue distribution, expressed in coelomocytes, excretory cells, uterine-seam cells and GLR cells.

In terms of biological role, functions as a GTPase-activating protein (GAP) for ced-10/rac-1 and CDC42. The sequence is that of GTPase-activating protein rrc-1 (rrc-1) from Caenorhabditis elegans.